We begin with the raw amino-acid sequence, 1387 residues long: DNA-directed RNA polymerase subunit beta' (1387 aa).

Residues C70, C72, C85, and C88 each coordinate Zn(2+). 3 residues coordinate Mg(2+): D461, D463, and D465. Residues C808, C882, C889, and C892 each coordinate Zn(2+). Positions 1367–1387 are disordered; it reads QDEAKGVGQETPRLSGQEAAE.

The protein belongs to the RNA polymerase beta' chain family. In terms of assembly, the RNAP catalytic core consists of 2 alpha, 1 beta, 1 beta' and 1 omega subunit. When a sigma factor is associated with the core the holoenzyme is formed, which can initiate transcription. The cofactor is Mg(2+). Requires Zn(2+) as cofactor.

It carries out the reaction RNA(n) + a ribonucleoside 5'-triphosphate = RNA(n+1) + diphosphate. DNA-dependent RNA polymerase catalyzes the transcription of DNA into RNA using the four ribonucleoside triphosphates as substrates. This Granulibacter bethesdensis (strain ATCC BAA-1260 / CGDNIH1) protein is DNA-directed RNA polymerase subunit beta'.